Consider the following 179-residue polypeptide: UPF0303 protein P4H10.12 (179 aa).

It belongs to the UPF0303 family.

This chain is UPF0303 protein P4H10.12, found in Schizosaccharomyces pombe (strain 972 / ATCC 24843) (Fission yeast).